The chain runs to 230 residues: 5'-methylthioadenosine/S-adenosylhomocysteine nucleosidase (230 aa).

Glu12 serves as the catalytic Proton acceptor. Residues Gly78, Ile153, and Met174–Glu175 each bind substrate. Asp198 acts as the Proton donor in catalysis.

The protein belongs to the PNP/UDP phosphorylase family. MtnN subfamily.

It catalyses the reaction S-adenosyl-L-homocysteine + H2O = S-(5-deoxy-D-ribos-5-yl)-L-homocysteine + adenine. The catalysed reaction is S-methyl-5'-thioadenosine + H2O = 5-(methylsulfanyl)-D-ribose + adenine. It carries out the reaction 5'-deoxyadenosine + H2O = 5-deoxy-D-ribose + adenine. The protein operates within amino-acid biosynthesis; L-methionine biosynthesis via salvage pathway; S-methyl-5-thio-alpha-D-ribose 1-phosphate from S-methyl-5'-thioadenosine (hydrolase route): step 1/2. Its function is as follows. Catalyzes the irreversible cleavage of the glycosidic bond in both 5'-methylthioadenosine (MTA) and S-adenosylhomocysteine (SAH/AdoHcy) to adenine and the corresponding thioribose, 5'-methylthioribose and S-ribosylhomocysteine, respectively. Also cleaves 5'-deoxyadenosine, a toxic by-product of radical S-adenosylmethionine (SAM) enzymes, into 5-deoxyribose and adenine. The chain is 5'-methylthioadenosine/S-adenosylhomocysteine nucleosidase from Shewanella denitrificans (strain OS217 / ATCC BAA-1090 / DSM 15013).